Here is a 147-residue protein sequence, read N- to C-terminus: Deoxyuridine 5'-triphosphate nucleotidohydrolase (147 aa).

Substrate contacts are provided by residues 67 to 69 (RSG), N80, and 84 to 86 (TID).

Belongs to the dUTPase family. The cofactor is Mg(2+).

It catalyses the reaction dUTP + H2O = dUMP + diphosphate + H(+). Its pathway is pyrimidine metabolism; dUMP biosynthesis; dUMP from dCTP (dUTP route): step 2/2. This enzyme is involved in nucleotide metabolism: it produces dUMP, the immediate precursor of thymidine nucleotides and it decreases the intracellular concentration of dUTP so that uracil cannot be incorporated into DNA. The protein is Deoxyuridine 5'-triphosphate nucleotidohydrolase of Anaeromyxobacter sp. (strain Fw109-5).